A 323-amino-acid chain; its full sequence is Formyltetrahydrofolate deformylase 1, mitochondrial (323 aa).

Residues 1–25 (MIRRITERASGFAKNIPILKSSRFH) constitute a mitochondrion transit peptide. An ACT domain is found at 41–124 (VHVFHCQDAV…SVVRVPSIDP (84 aa)). The active site involves Asp-267.

This sequence belongs to the PurU family. Expressed in leaves, cotyledons, roots, seeds and flowers.

Its subcellular location is the mitochondrion. It catalyses the reaction (6R)-10-formyltetrahydrofolate + H2O = (6S)-5,6,7,8-tetrahydrofolate + formate + H(+). Functionally, deformylase involved in photorespiration. Prevents excessive accumulation of 5-formyl tetrahydrofolate (THF), a potent inhibitor of the Gly decarboxylase/Ser hydroxymethyltransferase complex. This Arabidopsis thaliana (Mouse-ear cress) protein is Formyltetrahydrofolate deformylase 1, mitochondrial (PURU1).